The following is a 213-amino-acid chain: MDEKRVYITMYIKFAQKVLSLLSLKYASQKSVETYLYMFLYFGLGLRRNVTTLSLSQFDAKNLRFYPRPYAIYNDSPLYMIVPRHLVDIIVLYTRRFKIGLDQPLFRDIERPSVYERKIFEITGILPQDLVNACIATMIEYSKNPKQVARLLYLNKVYLDFIVRKLGFKLTNDFKLMTADGRILEPSPEVLHPFLYLAKKTKQQQEQGAGSLA.

This is an uncharacterized protein from Acidianus two-tailed virus (ATV).